Here is an 844-residue protein sequence, read N- to C-terminus: DNA mismatch repair protein MutS (844 aa).

610–617 (GPNMGGKS) is an ATP binding site.

It belongs to the DNA mismatch repair MutS family.

In terms of biological role, this protein is involved in the repair of mismatches in DNA. It is possible that it carries out the mismatch recognition step. This protein has a weak ATPase activity. In Francisella tularensis subsp. holarctica (strain FTNF002-00 / FTA), this protein is DNA mismatch repair protein MutS.